Consider the following 305-residue polypeptide: Undecaprenyl-diphosphatase (305 aa).

A run of 8 helical transmembrane segments spans residues 18–38 (GVTE…PALV), 55–75 (YLAF…VFFW), 103–123 (WLIV…EQLF), 130–150 (PVPA…GEVL), 187–207 (GVLI…RSGI), 225–245 (FSFL…IPEL), 246–266 (FGPL…ASFV), and 284–304 (LTPF…WLAL).

It belongs to the UppP family.

The protein localises to the cell membrane. The enzyme catalyses di-trans,octa-cis-undecaprenyl diphosphate + H2O = di-trans,octa-cis-undecaprenyl phosphate + phosphate + H(+). Functionally, catalyzes the dephosphorylation of undecaprenyl diphosphate (UPP). Confers resistance to bacitracin. The chain is Undecaprenyl-diphosphatase from Mycobacterium avium (strain 104).